We begin with the raw amino-acid sequence, 553 residues long: Glycine betaine/proline/choline transporter VP1723 (553 aa).

A run of 12 helical transmembrane segments spans residues 43–63 (NRVF…TLTF), 85–105 (FFLA…VTPL), 122–142 (AGWL…FFGV), 191–211 (WALH…IFSF), 231–251 (VWGW…VFGL), 278–298 (TQVV…VAGL), 310–330 (MILA…MAIL), 362–382 (WTAF…MFIA), 393–413 (FIIC…TAFG), 443–463 (VMPF…VFFI), 490–510 (VFWC…GGLA), and 515–535 (MAVT…VSLI).

It belongs to the BCCT transporter (TC 2.A.15) family.

The protein resides in the cell inner membrane. Involved in the uptake of osmoprotectants. Can transport glycine betaine, proline and choline. In Vibrio parahaemolyticus serotype O3:K6 (strain RIMD 2210633), this protein is Glycine betaine/proline/choline transporter VP1723.